We begin with the raw amino-acid sequence, 364 residues long: Leucine dehydrogenase (364 aa).

Lysine 80 is a catalytic residue. Residue 180-186 participates in NAD(+) binding; it reads GVGNVAY.

The protein belongs to the Glu/Leu/Phe/Val dehydrogenases family.

It carries out the reaction L-leucine + NAD(+) + H2O = 4-methyl-2-oxopentanoate + NH4(+) + NADH + H(+). It participates in amino-acid degradation; L-leucine degradation; 4-methyl-2-oxopentanoate from L-leucine (dehydrogenase route): step 1/1. Its function is as follows. Catalyzes the reversible deamination of L-leucine to 4-methyl-2-oxopentanoate. The sequence is that of Leucine dehydrogenase (yqiT) from Bacillus subtilis (strain 168).